The chain runs to 185 residues: Translation initiation factor IF-3 (185 aa).

It belongs to the IF-3 family. In terms of assembly, monomer.

Its subcellular location is the cytoplasm. Its function is as follows. IF-3 binds to the 30S ribosomal subunit and shifts the equilibrium between 70S ribosomes and their 50S and 30S subunits in favor of the free subunits, thus enhancing the availability of 30S subunits on which protein synthesis initiation begins. In Streptococcus pneumoniae (strain Hungary19A-6), this protein is Translation initiation factor IF-3.